The sequence spans 145 residues: D-aminoacyl-tRNA deacylase (145 aa).

Positions 137 to 138 match the Gly-cisPro motif, important for rejection of L-amino acids motif; it reads GP.

This sequence belongs to the DTD family. Homodimer.

The protein resides in the cytoplasm. The enzyme catalyses glycyl-tRNA(Ala) + H2O = tRNA(Ala) + glycine + H(+). The catalysed reaction is a D-aminoacyl-tRNA + H2O = a tRNA + a D-alpha-amino acid + H(+). Functionally, an aminoacyl-tRNA editing enzyme that deacylates mischarged D-aminoacyl-tRNAs. Also deacylates mischarged glycyl-tRNA(Ala), protecting cells against glycine mischarging by AlaRS. Acts via tRNA-based rather than protein-based catalysis; rejects L-amino acids rather than detecting D-amino acids in the active site. By recycling D-aminoacyl-tRNA to D-amino acids and free tRNA molecules, this enzyme counteracts the toxicity associated with the formation of D-aminoacyl-tRNA entities in vivo and helps enforce protein L-homochirality. The chain is D-aminoacyl-tRNA deacylase from Shewanella piezotolerans (strain WP3 / JCM 13877).